The following is a 503-amino-acid chain: MLLEMLNPMHYNITSMMPEVMPVATMPILLLTGFLLLVWNYEDTSSIPGPGYCMGIGPLISHCRFLWMGIGSACNYYNKMYGEFMRVWICGEETLIISKSSSMFHIMKHSHYSSRFGSKLGLQCIGMHENGIIFNNNPTLWKAIRPFFTKALSGPGLVRMVTVCVGSIITHLDRLEEVSNELGYVDVLTLMRRIMLDTSNILFLGIPLDESAIVVKIQGYFDAWQALLLKPDIFFKISWLYKKYEKSVKDLKDAMEILIEEKRHRISTAEKLEDHMDFATELIFAEKRGDLTRENVNQCILEMLIAAPDTMSVSVFFMLFLIAKHPKVEESIMKEIQAVVGERDIRIDDMQKLKVVENFIYESMRYQPVVNLVMRKALQDDIIDGYLVKKGTNIILNIGRMHRLEFFPKPNEFTLENFAKNVPYRYFQPFGFGPRSCAGKYIAMVMMKVVLVTLLRRFHVQTLQGECIENMQKKYGLSLHPDETNNLLEMVFVPRNSEKCLER.

Transmembrane regions (helical) follow at residues 19–39 (EVMP…LLVW), 51–71 (GYCM…MGIG), and 303–323 (MLIA…FLIA). Substrate is bound by residues aspartate 309 and methionine 374. Cysteine 437 serves as a coordination point for heme.

The protein belongs to the cytochrome P450 family. Heme is required as a cofactor.

Its subcellular location is the endoplasmic reticulum membrane. It localises to the microsome membrane. The catalysed reaction is testosterone + 3 reduced [NADPH--hemoprotein reductase] + 3 O2 = 17beta-estradiol + formate + 3 oxidized [NADPH--hemoprotein reductase] + 4 H2O + 4 H(+). It catalyses the reaction androst-4-ene-3,17-dione + 3 reduced [NADPH--hemoprotein reductase] + 3 O2 = estrone + formate + 3 oxidized [NADPH--hemoprotein reductase] + 4 H2O + 4 H(+). The enzyme catalyses androst-4-ene-3,17-dione + reduced [NADPH--hemoprotein reductase] + O2 = 19-hydroxyandrost-4-ene-3,17-dione + oxidized [NADPH--hemoprotein reductase] + H2O + H(+). It carries out the reaction 19-hydroxyandrost-4-ene-3,17-dione + reduced [NADPH--hemoprotein reductase] + O2 = 19-oxo-androst-4-ene-3,17-dione + oxidized [NADPH--hemoprotein reductase] + 2 H2O + H(+). The catalysed reaction is 19-oxo-androst-4-ene-3,17-dione + reduced [NADPH--hemoprotein reductase] + O2 = estrone + formate + oxidized [NADPH--hemoprotein reductase] + H2O + 2 H(+). It catalyses the reaction estrone + reduced [NADPH--hemoprotein reductase] + O2 = 2-hydroxyestrone + oxidized [NADPH--hemoprotein reductase] + H2O + H(+). The enzyme catalyses 17beta-hydroxy-5alpha-androstan-3-one + reduced [NADPH--hemoprotein reductase] + O2 = 17beta,19-dihydroxy-3-oxo-5alpha-androstanone + oxidized [NADPH--hemoprotein reductase] + H2O + H(+). It carries out the reaction 17beta,19-dihydroxy-3-oxo-5alpha-androstanone + reduced [NADPH--hemoprotein reductase] + O2 = 17beta-hydroxy-3,19-dioxo-5alpha-androstanone + oxidized [NADPH--hemoprotein reductase] + 2 H2O + H(+). The catalysed reaction is 17beta-hydroxy-3,19-dioxo-5alpha-androstanone + reduced [NADPH--hemoprotein reductase] + O2 = 17beta-hydroxy-3-oxo-19-nor-5alpha-androst-1-ene + formate + oxidized [NADPH--hemoprotein reductase] + H2O + 2 H(+). It participates in steroid hormone biosynthesis. Its function is as follows. A cytochrome P450 monooxygenase that catalyzes the conversion of C19 androgens, androst-4-ene-3,17-dione (androstenedione) and testosterone to the C18 estrogens, estrone and estradiol, respectively. Catalyzes three successive oxidations of C19 androgens: two conventional oxidations at C19 yielding 19-hydroxy and 19-oxo/19-aldehyde derivatives, followed by a third oxidative aromatization step that involves C1-beta hydrogen abstraction combined with cleavage of the C10-C19 bond to yield a phenolic A ring and formic acid. Alternatively, the third oxidative reaction yields a 19-norsteroid and formic acid. Converts dihydrotestosterone to delta1,10-dehydro 19-nordihydrotestosterone and may play a role in homeostasis of this potent androgen. Also displays 2-hydroxylase activity toward estrone. Mechanistically, uses molecular oxygen inserting one oxygen atom into a substrate, and reducing the second into a water molecule, with two electrons provided by NADPH via cytochrome P450 reductase (CPR; NADPH-ferrihemoprotein reductase). The polypeptide is Aromatase (CYP19A1) (Canis lupus familiaris (Dog)).